Consider the following 156-residue polypeptide: Endogenous retrovirus group K member 24 Pro protein (156 aa).

One can recognise a Peptidase A2 domain in the interval 21–96 (FEGLVDTGAD…IPLNLWGRDL (76 aa)). Asp-26 is a catalytic residue. One can recognise a G-patch domain in the interval 111–156 (YSPTSQKIMTKMGYIPGKGLGKNEDGIKIPFEAKINQKREGIGYPF).

The protein belongs to the peptidase A2 family. HERV class-II K(HML-2) subfamily. In terms of assembly, active as a homodimer. Autoproteolytically processed at the N-terminus. Expected C-terminal autoprocessing not detected. The sequence shown is that of the processed Pro protein.

It carries out the reaction Processing at the authentic HIV-1 PR recognition site and release of the mature p17 matrix and the p24 capsid protein, as a result of the cleavage of the -SQNY-|-PIVQ- cleavage site.. Retroviral proteases have roles in processing of the primary translation products and the maturation of the viral particle. Endogenous Pro proteins may have kept, lost or modified their original function during evolution. This endogenous protein has retained most of the characteristics of retroviral proteases. This chain is Endogenous retrovirus group K member 24 Pro protein (ERVK-24), found in Homo sapiens (Human).